The sequence spans 511 residues: MMKMRWLSAAVMLTLYTSSSWAFSIDDVAKQAQSLAGKGYEAPKSNLPSVFRDMKYADYQQIQFNHDKAYWNNLKTPFKLEFYHQGMYFDTPVKINEVTATAVKRIKYSPDYFTFGDVQHDKDTVKDLGFAGFKVLYPINSKDKNDEIVSMLGASYFRVIGAGQVYGLSARGLAIDTALPSGEEFPRFKEFWIERPKPTDKRLTIYALLDSPRATGAYKFVVMPGRDTVVDVQSKIYLREKVGKLGVAPLTSMFLFGPNQPSPANNYRPELHDSNGLSIHAGNGEWIWRPLNNPKHLAVSSFSMENPQGFGLLQRGRDFSRFEDLDDRYDLRPSAWVTPKGEWGKGSVELVEIPTNDETNDNIVAYWTPDQLPEPGKEMNFKYTITFSRDEDKLHAPDNAWVQQTRRSTGDVKQSNLIRQPDGTIAFVVDFTGAEMKKLPEDTPVTAQTSIGDNGEIVESTVRYNPVTKGWRLVMRVKVKDAKKTTEMRAALVNADQTLSETWSYQLPANE.

A signal peptide spans 1–22 (MMKMRWLSAAVMLTLYTSSSWA).

Belongs to the OpgD/OpgG family.

The protein resides in the periplasm. The protein operates within glycan metabolism; osmoregulated periplasmic glucan (OPG) biosynthesis. In terms of biological role, involved in the biosynthesis of osmoregulated periplasmic glucans (OPGs). In Escherichia coli O8 (strain IAI1), this protein is Glucans biosynthesis protein G.